A 439-amino-acid chain; its full sequence is Histidinol dehydrogenase (439 aa).

3 residues coordinate NAD(+): Y125, Q187, and N210. Residues T233, Q255, and H258 each contribute to the substrate site. Zn(2+) is bound by residues Q255 and H258. Active-site proton acceptor residues include E323 and H324. Substrate contacts are provided by H324, D357, E411, and H416. Residue D357 coordinates Zn(2+). H416 contributes to the Zn(2+) binding site.

Belongs to the histidinol dehydrogenase family. The cofactor is Zn(2+).

It catalyses the reaction L-histidinol + 2 NAD(+) + H2O = L-histidine + 2 NADH + 3 H(+). It functions in the pathway amino-acid biosynthesis; L-histidine biosynthesis; L-histidine from 5-phospho-alpha-D-ribose 1-diphosphate: step 9/9. Catalyzes the sequential NAD-dependent oxidations of L-histidinol to L-histidinaldehyde and then to L-histidine. This chain is Histidinol dehydrogenase, found in Symbiobacterium thermophilum (strain DSM 24528 / JCM 14929 / IAM 14863 / T).